Reading from the N-terminus, the 653-residue chain is MQGKKQRITQLTELLDEAARVYEQEDREIMSNFEYDKLYDELKKLEEETGIVLAGSPTRKVGYEILSELPKERHESAMLSLDKTKEVPALIDWLGNKEGILSWKMDGLTIVLTYRNGELVKAVTRGNGEVGEVVTNNAKVFKNLPLTIPYEGELIIRGEAVIRYSDFEMINAQIPDADAKYKNPRNLCSGSVRQLNNAITAKRNVNFFAFALIRMDEMNRFKTMMEQFNWLKELGFDVVEEKLVTAENMAETMEYFESHIITNDFPSDGLVLFFNDIAYGESLGRTSKFPRNGIAFKWRDEIKETTLQEIEWSASRTGLINPVAIFEPVELEGTTVSRASLHNISIMEGLELGLGDKVTVYKANMIIPQIADNLTRSGHLPIPKTCPVCGGDTMIKQDSDVKSLYCMNPECLAKKIKSFTHFVSRDAMNIEGLSEATIEKLIAKGLIKELADIFHVKDFKEEITTMEGFGEKSFRNLVDSVEKARTPILAKFIYSLGIANVGLANAKLICKEFGYDFNKVSNATVDELTQIPQIGYVIAEAFVSYFQKPENKLIIEDLLKEITFEKEEAAGGSEKLKGLTFVITGSVEHFTNRNEVKDVIEQHGGKVTGSVTAKTNYLINNDNTSSSSKNKKARELGIPVITEEEFIQLLNEA.

NAD(+)-binding positions include 32–36 (NFEYD) and 80–81 (SL). Lysine 104 serves as the catalytic N6-AMP-lysine intermediate. The NAD(+) site is built by arginine 125, glutamate 159, and lysine 297. Positions 386, 389, 406, and 411 each coordinate Zn(2+). In terms of domain architecture, BRCT spans 571–653 (GGSEKLKGLT…EEFIQLLNEA (83 aa)).

It belongs to the NAD-dependent DNA ligase family. LigA subfamily. The cofactor is Mg(2+). Mn(2+) serves as cofactor.

It carries out the reaction NAD(+) + (deoxyribonucleotide)n-3'-hydroxyl + 5'-phospho-(deoxyribonucleotide)m = (deoxyribonucleotide)n+m + AMP + beta-nicotinamide D-nucleotide.. In terms of biological role, DNA ligase that catalyzes the formation of phosphodiester linkages between 5'-phosphoryl and 3'-hydroxyl groups in double-stranded DNA using NAD as a coenzyme and as the energy source for the reaction. It is essential for DNA replication and repair of damaged DNA. This Lachnoclostridium phytofermentans (strain ATCC 700394 / DSM 18823 / ISDg) (Clostridium phytofermentans) protein is DNA ligase.